The following is a 118-amino-acid chain: UPF0342 protein BCG9842_B4422 (118 aa).

The protein belongs to the UPF0342 family.

The protein is UPF0342 protein BCG9842_B4422 of Bacillus cereus (strain G9842).